A 525-amino-acid polypeptide reads, in one-letter code: Putative ribose/galactose/methyl galactoside import ATP-binding protein (525 aa).

Residues 1-30 (MFGSATANPPAQRDLPSSDSDSPTPDAQPP) are disordered. Over residues 14–25 (DLPSSDSDSPTP) the composition is skewed to low complexity. ABC transporter domains are found at residues 33–269 (LEIS…VGRE) and 279–523 (KPPG…SGHK). Position 65-72 (65-72 (GENGAGKS)) interacts with ATP.

This sequence belongs to the ABC transporter superfamily. Carbohydrate importer 2 (CUT2) (TC 3.A.1.2) family.

The protein resides in the cell inner membrane. The enzyme catalyses D-ribose(out) + ATP + H2O = D-ribose(in) + ADP + phosphate + H(+). It catalyses the reaction D-galactose(out) + ATP + H2O = D-galactose(in) + ADP + phosphate + H(+). In terms of biological role, part of an ABC transporter complex involved in carbohydrate import. Could be involved in ribose, galactose and/or methyl galactoside import. Responsible for energy coupling to the transport system. The protein is Putative ribose/galactose/methyl galactoside import ATP-binding protein of Pseudomonas savastanoi pv. phaseolicola (strain 1448A / Race 6) (Pseudomonas syringae pv. phaseolicola (strain 1448A / Race 6)).